Reading from the N-terminus, the 452-residue chain is Phosphoglucosamine mutase (452 aa).

The active-site Phosphoserine intermediate is S104. Mg(2+) contacts are provided by S104, D246, D248, and D250. S104 carries the phosphoserine modification.

It belongs to the phosphohexose mutase family. Requires Mg(2+) as cofactor. Activated by phosphorylation.

The enzyme catalyses alpha-D-glucosamine 1-phosphate = D-glucosamine 6-phosphate. Its function is as follows. Catalyzes the conversion of glucosamine-6-phosphate to glucosamine-1-phosphate. This Streptomyces avermitilis (strain ATCC 31267 / DSM 46492 / JCM 5070 / NBRC 14893 / NCIMB 12804 / NRRL 8165 / MA-4680) protein is Phosphoglucosamine mutase.